Reading from the N-terminus, the 159-residue chain is Ribosomal RNA large subunit methyltransferase H (159 aa).

S-adenosyl-L-methionine contacts are provided by residues Leu76, Gly108, and 127–132 (FGLLTL).

It belongs to the RNA methyltransferase RlmH family. As to quaternary structure, homodimer.

It localises to the cytoplasm. It catalyses the reaction pseudouridine(1915) in 23S rRNA + S-adenosyl-L-methionine = N(3)-methylpseudouridine(1915) in 23S rRNA + S-adenosyl-L-homocysteine + H(+). Specifically methylates the pseudouridine at position 1915 (m3Psi1915) in 23S rRNA. This is Ribosomal RNA large subunit methyltransferase H from Streptococcus mutans serotype c (strain ATCC 700610 / UA159).